Consider the following 316-residue polypeptide: tRNA dimethylallyltransferase (316 aa).

9–16 (GPTASGKS) is a binding site for ATP. A substrate-binding site is contributed by 11-16 (TASGKS). Interaction with substrate tRNA regions lie at residues 34–37 (DSMQ) and 158–162 (QRLAR).

This sequence belongs to the IPP transferase family. As to quaternary structure, monomer. Mg(2+) is required as a cofactor.

It carries out the reaction adenosine(37) in tRNA + dimethylallyl diphosphate = N(6)-dimethylallyladenosine(37) in tRNA + diphosphate. Catalyzes the transfer of a dimethylallyl group onto the adenine at position 37 in tRNAs that read codons beginning with uridine, leading to the formation of N6-(dimethylallyl)adenosine (i(6)A). This Hyphomonas neptunium (strain ATCC 15444) protein is tRNA dimethylallyltransferase.